A 96-amino-acid polypeptide reads, in one-letter code: Co-chaperonin GroES (96 aa).

The protein belongs to the GroES chaperonin family. Heptamer of 7 subunits arranged in a ring. Interacts with the chaperonin GroEL.

The protein resides in the cytoplasm. In terms of biological role, together with the chaperonin GroEL, plays an essential role in assisting protein folding. The GroEL-GroES system forms a nano-cage that allows encapsulation of the non-native substrate proteins and provides a physical environment optimized to promote and accelerate protein folding. GroES binds to the apical surface of the GroEL ring, thereby capping the opening of the GroEL channel. In Thiobacillus denitrificans (strain ATCC 25259 / T1), this protein is Co-chaperonin GroES.